The primary structure comprises 149 residues: Large ribosomal subunit protein bL9 (149 aa).

This sequence belongs to the bacterial ribosomal protein bL9 family.

Functionally, binds to the 23S rRNA. In Geobacillus stearothermophilus (Bacillus stearothermophilus), this protein is Large ribosomal subunit protein bL9 (rplI).